The chain runs to 434 residues: Probable proline transporter 2 (434 aa).

The next 11 helical transmembrane spans lie at P26–Y46, S49–I69, L106–A126, I149–L169, I171–S191, I213–P233, L251–W271, L297–F317, V339–L359, F362–M382, and V403–V423.

This sequence belongs to the amino acid/polyamine transporter 2 family. Amino acid/auxin permease (AAAP) (TC 2.A.18.3) subfamily.

Its subcellular location is the cell membrane. Its function is as follows. Proline transporter that mediates proline transport across the plasma membrane. This Oryza sativa subsp. japonica (Rice) protein is Probable proline transporter 2.